Reading from the N-terminus, the 271-residue chain is Thiazole synthase (271 aa).

Lys95 functions as the Schiff-base intermediate with DXP in the catalytic mechanism. 1-deoxy-D-xylulose 5-phosphate contacts are provided by residues Gly156, 182–183, and 204–205; these read AG and NT.

The protein belongs to the ThiG family. In terms of assembly, homotetramer. Forms heterodimers with either ThiH or ThiS.

It localises to the cytoplasm. It carries out the reaction [ThiS sulfur-carrier protein]-C-terminal-Gly-aminoethanethioate + 2-iminoacetate + 1-deoxy-D-xylulose 5-phosphate = [ThiS sulfur-carrier protein]-C-terminal Gly-Gly + 2-[(2R,5Z)-2-carboxy-4-methylthiazol-5(2H)-ylidene]ethyl phosphate + 2 H2O + H(+). It functions in the pathway cofactor biosynthesis; thiamine diphosphate biosynthesis. In terms of biological role, catalyzes the rearrangement of 1-deoxy-D-xylulose 5-phosphate (DXP) to produce the thiazole phosphate moiety of thiamine. Sulfur is provided by the thiocarboxylate moiety of the carrier protein ThiS. In vitro, sulfur can be provided by H(2)S. This is Thiazole synthase from Yersinia pestis.